The primary structure comprises 518 residues: Sensor protein kinase HptS (518 aa).

The next 2 helical transmembrane spans lie at 20–40 (IFPVFLVIIIGLVSFYAIYIW) and 222–242 (GITLLIVMAVVLVLLVIFGFI). In terms of domain architecture, Histidine kinase spans 297-513 (EQLIHSIEHT…LICYKIPLSR (217 aa)). A Phosphohistidine; by autocatalysis modification is found at His-325.

In terms of processing, autophosphorylated.

Its subcellular location is the cell membrane. The enzyme catalyses ATP + protein L-histidine = ADP + protein N-phospho-L-histidine.. Member of the two-component regulatory system HptS/HptR that regulates genes involved in hexose phosphate transport system in response to changes in extracellular phosphate sources. May act as a sensor protein kinase which is autophosphorylated at a histidine residue and transfers its phosphate group to the conserved aspartic acid residue in the regulatory domain of HptS. In turn, HptS antagonizes CcpA-dependent transcription of a subset of CcpA-regulated genes involved in antibiotic susceptibility. This chain is Sensor protein kinase HptS (hptS), found in Staphylococcus aureus (strain bovine RF122 / ET3-1).